The chain runs to 432 residues: 3-phosphoshikimate 1-carboxyvinyltransferase (432 aa).

3-phosphoshikimate is bound by residues lysine 23, serine 24, and arginine 28. Lysine 23 contributes to the phosphoenolpyruvate binding site. Phosphoenolpyruvate contacts are provided by glycine 95 and arginine 123. 3-phosphoshikimate contacts are provided by serine 167, glutamine 169, aspartate 317, and lysine 344. Phosphoenolpyruvate is bound at residue glutamine 169. Aspartate 317 (proton acceptor) is an active-site residue. Residues arginine 348 and arginine 390 each contribute to the phosphoenolpyruvate site.

This sequence belongs to the EPSP synthase family. In terms of assembly, monomer.

The protein resides in the cytoplasm. The catalysed reaction is 3-phosphoshikimate + phosphoenolpyruvate = 5-O-(1-carboxyvinyl)-3-phosphoshikimate + phosphate. Its pathway is metabolic intermediate biosynthesis; chorismate biosynthesis; chorismate from D-erythrose 4-phosphate and phosphoenolpyruvate: step 6/7. In terms of biological role, catalyzes the transfer of the enolpyruvyl moiety of phosphoenolpyruvate (PEP) to the 5-hydroxyl of shikimate-3-phosphate (S3P) to produce enolpyruvyl shikimate-3-phosphate and inorganic phosphate. The protein is 3-phosphoshikimate 1-carboxyvinyltransferase of Staphylococcus aureus (strain MRSA252).